A 645-amino-acid polypeptide reads, in one-letter code: DNA mismatch repair protein MutL (645 aa).

The protein belongs to the DNA mismatch repair MutL/HexB family.

Functionally, this protein is involved in the repair of mismatches in DNA. It is required for dam-dependent methyl-directed DNA mismatch repair. May act as a 'molecular matchmaker', a protein that promotes the formation of a stable complex between two or more DNA-binding proteins in an ATP-dependent manner without itself being part of a final effector complex. The chain is DNA mismatch repair protein MutL from Geobacillus thermodenitrificans (strain NG80-2).